The sequence spans 248 residues: Myelin protein P0 (248 aa).

Positions 1-29 (MAPGAPSSSPSPILAVLLFSSLVLSPAQA) are cleaved as a signal peptide. Positions 30 to 143 (IVVYTDREVH…DIVGKTSQVT (114 aa)) constitute an Ig-like V-type domain. The Extracellular segment spans residues 30–153 (IVVYTDREVH…LYVFEKVPTR (124 aa)). A disulfide bridge links cysteine 50 with cysteine 127. Asparagine 122 carries an N-linked (GlcNAc...) (complex) asparagine glycan. Residues 154–179 (YGVVLGAVIGGVLGVVLLLLLLFYVV) form a helical membrane-spanning segment. The Cytoplasmic segment spans residues 180-248 (RYCWLRRQAA…GLGESRKDKK (69 aa)). Phosphoserine; by PKC is present on serine 210. A disordered region spans residues 224 to 248 (DHSRSTKAVSEKKAKGLGESRKDKK). Phosphoserine is present on residues serine 226 and serine 228. Phosphoserine; by PKC occurs at positions 233 and 243.

This sequence belongs to the myelin P0 protein family. In terms of assembly, homodimer and homotetramer. N-glycosylated; contains sulfate-substituted glycan. Found only in peripheral nervous system Schwann cells.

The protein resides in the cell membrane. It is found in the myelin membrane. Functionally, is an adhesion molecule necessary for normal myelination in the peripheral nervous system. It mediates adhesion between adjacent myelin wraps and ultimately drives myelin compaction. The sequence is that of Myelin protein P0 (MPZ) from Homo sapiens (Human).